The primary structure comprises 247 residues: Bax inhibitor 1 (247 aa).

M1 is subject to N-acetylmethionine. 6 consecutive transmembrane segments (helical) span residues 58-78, 92-112, 118-138, 145-165, 173-193, and 212-232; these read VLWN…MIWL, LLFV…KVAI, ILIT…AAAM, YLYL…LQFA, ASIF…YMVV, and HSLT…IIML.

It belongs to the BI1 family. Interacts (via C-terminus) with calmodulin, CYTB5-B and CYTB5-D. Interacts indirectly with FAH1 via CYTB5-D. Expressed in root tips, root vasculature, flower tissues, including stamens and sepals, and in the base of siliques. Not detected in mature leaves.

It is found in the endoplasmic reticulum membrane. Functionally, suppressor of apoptosis. Modulator of endoplasmic reticulum stress-mediated programmed cell death. Involved in methyl jasmonate-induced leaf senescence through regulating cytoplasmic calcium level. The chain is Bax inhibitor 1 (BI-1) from Arabidopsis thaliana (Mouse-ear cress).